We begin with the raw amino-acid sequence, 471 residues long: Putative multidrug resistance protein MdtD (471 aa).

The next 13 helical transmembrane spans lie at 12–32 (LWIVAFGFFMQSLDTTIVNTA), 49–69 (MIIVSYVLTVAVMLPASGWLA), 77–97 (IFFTAIVLFTAGSLFCAQAST), 102–124 (VMARVLQGVGGAMMVPVGRLTVM), 138–158 (FVTLPGQVGPLLGPALGGVLV), 165–185 (WIFLINIPVGIVGAIATLCLM), 195–215 (FDLSGFLLLAAGMATLTLALD), 220–240 (LGISPAWLAGLVAVGLCALLL), 263–283 (FSLGLGGSFAGRIGSGMLPFM), 286–306 (VFLQIGLGFSPFHAGLMMIPM), 329–351 (VLVASTLGLAAVSLLFMFSALAG), 393–413 (LLSMVMQLSMSIGVTIAGLLL), and 431–451 (VFLYTYLSMAAIIALPALIFS).

This sequence belongs to the major facilitator superfamily. TCR/Tet family.

It localises to the cell inner membrane. The protein is Putative multidrug resistance protein MdtD of Klebsiella pneumoniae subsp. pneumoniae (strain ATCC 700721 / MGH 78578).